The sequence spans 240 residues: C-type lectin domain family 4 member A (240 aa).

Residues 1-48 (MASEITYAEVRIKNESNSSVTYSGSPAAPREKPTRHLSKPGSLLVPFT) lie on the Cytoplasmic side of the membrane. An ITIM motif motif is present at residues 5-10 (ITYAEV). The segment at 18-38 (SSVTYSGSPAAPREKPTRHLS) is disordered. A helical; Signal-anchor for type II membrane protein transmembrane segment spans residues 49-69 (SLMVLLLLLAITFLVAFIIYF). At 70–240 (QKYSQFLEEK…SVCQMKKIQL (171 aa)) the chain is on the extracellular side. Intrachain disulfides connect C107–C118, C140–C233, and C208–C225. Residues 129-235 (SKASWSESEK…SGKQQSVCQM (107 aa)) form the C-type lectin domain. Residues V149 and E155 each contribute to the Ca(2+) site. The N-linked (GlcNAc...) asparagine glycan is linked to N190. Ca(2+) contacts are provided by E200, S202, and E206. Residues 200–202 (EPS) and E206 contribute to the alpha-D-mannopyranose site. 211–213 (INH) contacts N-acetyl-D-glucosamine. Residues N221 and D222 each contribute to the Ca(2+) site.

In terms of assembly, may interact with PTPN6 via its ITIM site. As to expression, expressed by myeloid cells (dendritic cells, macrophages, and neutrophils) and B-cells.

Its subcellular location is the cell membrane. Its function is as follows. C-type lectin receptor that binds carbohydrates mannose and fucose but also weakly interacts with N-acetylglucosamine (GlcNAc) in a Ca(2+)-dependent manner. Involved in regulating immune reactivity. Once triggered by antigen, it is internalized by clathrin-dependent endocytosis and delivers its antigenic cargo into the antigen presentation pathway resulting in cross-priming of CD8(+) T cells. This cross-presentation and cross-priming are enhanced by TLR7 and TLR8 agonists with increased expansion of the CD8(+) T cells, high production of IFNG and TNF with reduced levels of IL4, IL5 and IL13. In plasmacytoid dendritic cells, inhibits TLR9-mediated IFNA and TNF production. May be involved via its ITIM motif (immunoreceptor tyrosine-based inhibitory motifs) in the inhibition of B-cell-receptor-mediated calcium mobilization and protein tyrosine phosphorylation. The chain is C-type lectin domain family 4 member A (Clec4a) from Rattus norvegicus (Rat).